We begin with the raw amino-acid sequence, 263 residues long: Phosphoinositide-3-kinase-interacting protein 1 (263 aa).

The signal sequence occupies residues 1–21 (MLLAWVQAFLVSNMLLAEAYG). Over 22–168 (SGGCFWDNGH…NSKEKKDLGT (147 aa)) the chain is Extracellular. The Kringle domain maps to 24-101 (GCFWDNGHLY…EKRPCEDLRC (78 aa)). Cystine bridges form between C25/C101, C46/C82, and C70/C96. Residue S39 is glycosylated (O-linked (GalNAc...) serine). The N-linked (GlcNAc...) (complex) asparagine glycan is linked to N66. Residues 169 to 189 (LGYVLGITMMVIIIAIGAGII) traverse the membrane as a helical segment. The Cytoplasmic segment spans residues 190–263 (LGYSYKRGKD…LMGQAGTPGA (74 aa)). A compositionally biased stretch (polar residues) spans 242 to 251 (QTPVDPQEGT). Residues 242-263 (QTPVDPQEGTTPLMGQAGTPGA) form a disordered region.

Post-translationally, N- and O-glycosylated. O-glycosylated with core 1 or possibly core 8 glycans. N-glycan heterogeneity at Asn-66: dHex1Hex5HexNAc4 (major) and dHex1Hex6HexNAc5 (minor).

Its subcellular location is the cell membrane. Functionally, negative regulator of hepatic phosphatidylinositol 3-kinase (PI3K) activity. The chain is Phosphoinositide-3-kinase-interacting protein 1 (PIK3IP1) from Homo sapiens (Human).